A 286-amino-acid chain; its full sequence is Transcription initiation factor IIA large subunit (286 aa).

3 disordered regions span residues 120-145 (NTVE…ADVT), 167-195 (TVEN…KEKE), and 208-236 (KRSA…EGEE). Residues 175–195 (SEKKDDEEKEEDVEKTRKEKE) show a composition bias toward basic and acidic residues. Residues 214 to 236 (DTDEVGSELDDSDDDYLISEGEE) show a composition bias toward acidic residues.

Belongs to the TFIIA subunit 1 family. As to quaternary structure, TFIIA is a heterodimer composed of the large TOA1 and a small TOA2 subunits. Interacts with KAP122.

It is found in the cytoplasm. The protein localises to the nucleus. Its function is as follows. TFIIA is a component of the transcription machinery of RNA polymerase II and implicated in the regulation of basal transcription. Interacts with TBP (the TATA-binding protein). The protein is Transcription initiation factor IIA large subunit (TOA1) of Saccharomyces cerevisiae (strain ATCC 204508 / S288c) (Baker's yeast).